A 140-amino-acid polypeptide reads, in one-letter code: Transcription antitermination protein NusB (140 aa).

This sequence belongs to the NusB family.

Functionally, involved in transcription antitermination. Required for transcription of ribosomal RNA (rRNA) genes. Binds specifically to the boxA antiterminator sequence of the ribosomal RNA (rrn) operons. In Alteromonas mediterranea (strain DSM 17117 / CIP 110805 / LMG 28347 / Deep ecotype), this protein is Transcription antitermination protein NusB.